The primary structure comprises 187 residues: UPF0340 protein SP_0663 (187 aa).

This sequence belongs to the UPF0340 family.

In Streptococcus pneumoniae serotype 4 (strain ATCC BAA-334 / TIGR4), this protein is UPF0340 protein SP_0663.